Reading from the N-terminus, the 108-residue chain is Small ribosomal subunit protein bS16 (108 aa).

The interval 82 to 108 is disordered; the sequence is ESKFSKNTQTENKKPVSKKTTKKSKDN. Basic residues predominate over residues 96–108; sequence PVSKKTTKKSKDN.

This sequence belongs to the bacterial ribosomal protein bS16 family.

In Mycoplasma mycoides subsp. mycoides SC (strain CCUG 32753 / NCTC 10114 / PG1), this protein is Small ribosomal subunit protein bS16.